The sequence spans 127 residues: UPF0251 protein Ccel_0627 (127 aa).

This sequence belongs to the UPF0251 family.

The polypeptide is UPF0251 protein Ccel_0627 (Ruminiclostridium cellulolyticum (strain ATCC 35319 / DSM 5812 / JCM 6584 / H10) (Clostridium cellulolyticum)).